We begin with the raw amino-acid sequence, 177 residues long: ATP synthase subunit delta (177 aa).

Belongs to the ATPase delta chain family. In terms of assembly, F-type ATPases have 2 components, F(1) - the catalytic core - and F(0) - the membrane proton channel. F(1) has five subunits: alpha(3), beta(3), gamma(1), delta(1), epsilon(1). F(0) has three main subunits: a(1), b(2) and c(10-14). The alpha and beta chains form an alternating ring which encloses part of the gamma chain. F(1) is attached to F(0) by a central stalk formed by the gamma and epsilon chains, while a peripheral stalk is formed by the delta and b chains.

It is found in the cell inner membrane. Its function is as follows. F(1)F(0) ATP synthase produces ATP from ADP in the presence of a proton or sodium gradient. F-type ATPases consist of two structural domains, F(1) containing the extramembraneous catalytic core and F(0) containing the membrane proton channel, linked together by a central stalk and a peripheral stalk. During catalysis, ATP synthesis in the catalytic domain of F(1) is coupled via a rotary mechanism of the central stalk subunits to proton translocation. Functionally, this protein is part of the stalk that links CF(0) to CF(1). It either transmits conformational changes from CF(0) to CF(1) or is implicated in proton conduction. This is ATP synthase subunit delta from Aeromonas salmonicida (strain A449).